A 202-amino-acid chain; its full sequence is Tetratricopeptide repeat protein 36 (202 aa).

TPR repeat units lie at residues 49-82, 83-116, and 121-154; these read AQDL…LPER, ASAY…SGIA, and RQAL…GSDF.

The protein belongs to the TTC36 family.

The polypeptide is Tetratricopeptide repeat protein 36 (ttc36) (Xenopus tropicalis (Western clawed frog)).